The sequence spans 374 residues: Glutamate 5-kinase (374 aa).

Position 16 (Lys-16) interacts with ATP. Substrate is bound by residues Ser-56, Asp-143, and Asn-155. ATP contacts are provided by residues 175–176 (TD) and 217–223 (SGGMLTK). The 79-residue stretch at 282–360 (RGALILDDGA…SNIGAILGYK (79 aa)) folds into the PUA domain.

It belongs to the glutamate 5-kinase family.

Its subcellular location is the cytoplasm. It carries out the reaction L-glutamate + ATP = L-glutamyl 5-phosphate + ADP. Its pathway is amino-acid biosynthesis; L-proline biosynthesis; L-glutamate 5-semialdehyde from L-glutamate: step 1/2. In terms of biological role, catalyzes the transfer of a phosphate group to glutamate to form L-glutamate 5-phosphate. This chain is Glutamate 5-kinase, found in Marinomonas sp. (strain MWYL1).